The primary structure comprises 465 residues: Apolipoprotein N-acyltransferase (465 aa).

6 consecutive transmembrane segments (helical) span residues 12 to 32, 49 to 69, 80 to 100, 122 to 142, 161 to 181, and 189 to 209; these read AVLG…LSML, ALWG…LHPL, LPVA…LLLL, LLAL…LFWI, WLGS…LWQL, and CAWW…SLSP. Residues 221–448 form the CN hydrolase domain; the sequence is WQPAIPTREK…DAVAAAELQR (228 aa). Glutamate 262 acts as the Proton acceptor in catalysis. Lysine 312 is a catalytic residue. Catalysis depends on cysteine 360, which acts as the Nucleophile.

This sequence belongs to the CN hydrolase family. Apolipoprotein N-acyltransferase subfamily.

It is found in the cell inner membrane. It carries out the reaction N-terminal S-1,2-diacyl-sn-glyceryl-L-cysteinyl-[lipoprotein] + a glycerophospholipid = N-acyl-S-1,2-diacyl-sn-glyceryl-L-cysteinyl-[lipoprotein] + a 2-acyl-sn-glycero-3-phospholipid + H(+). It functions in the pathway protein modification; lipoprotein biosynthesis (N-acyl transfer). In terms of biological role, catalyzes the phospholipid dependent N-acylation of the N-terminal cysteine of apolipoprotein, the last step in lipoprotein maturation. This Parasynechococcus marenigrum (strain WH8102) protein is Apolipoprotein N-acyltransferase.